A 336-amino-acid polypeptide reads, in one-letter code: MTNSTKVEKPWTKWHERLHKSLKSKSNLLPYGSSLLISVSGGQDSMALLKLILDLQRIYEWKVHVWHGDHGWHNQSRQIAEELEEWCKCQKLSFFCNRTNKQKVSTEEDARNWRYKSLIQQAKTLSKESPSLPCERVLTGHTANDRTETFIMNLARGAHLKGLSSLREDRTLETKIQLIRPILRFSRQETIQICDEMDLPIWIDPSNSNIAYSRNKIRAEIIPVLESLHPQSTIRISNLAERLTSLQKDQHQLAHLALGALLTSTGLSRSKMTKLSKTVRAIILAQWLEDNKAPLLSSKQLEELSQKIGKNKGPGNMDISNHLKIRWNKNSIELIN.

Position 40 to 45 (40 to 45 (SGGQDS)) interacts with ATP.

The protein belongs to the tRNA(Ile)-lysidine synthase family.

Its subcellular location is the cytoplasm. It catalyses the reaction cytidine(34) in tRNA(Ile2) + L-lysine + ATP = lysidine(34) in tRNA(Ile2) + AMP + diphosphate + H(+). In terms of biological role, ligates lysine onto the cytidine present at position 34 of the AUA codon-specific tRNA(Ile) that contains the anticodon CAU, in an ATP-dependent manner. Cytidine is converted to lysidine, thus changing the amino acid specificity of the tRNA from methionine to isoleucine. The chain is tRNA(Ile)-lysidine synthase from Prochlorococcus marinus (strain SARG / CCMP1375 / SS120).